The primary structure comprises 837 residues: Vacuolar membrane protease (837 aa).

Over 1-36 (MSEEEVHDTSSEASEVFTNQPNAFVRGVRSIFGYRK) the chain is Cytoplasmic. A helical transmembrane segment spans residues 37–57 (TSLTLFVILTIVVTAGLSFYD). At 58–355 (NSLELTIELP…FATPISALAR (298 aa)) the chain is on the vacuolar side. N-linked (GlcNAc...) asparagine glycosylation is present at asparagine 143. Zn(2+) is bound by residues histidine 157 and aspartate 169. The active-site Proton acceptor is glutamate 201. 3 residues coordinate Zn(2+): glutamate 202, glutamate 227, and histidine 299. A helical membrane pass occupies residues 356–376 (VNLVLLVLFPVVSTPLLFVIV). The Cytoplasmic portion of the chain corresponds to 377–384 (KYKKWKLR). The helical transmembrane segment at 385-405 (VTNFLGVPLAMGLAVAVGQVG) threads the bilayer. The Vacuolar segment spans residues 406 to 415 (NPMLVSSHPM). The chain crosses the membrane as a helical span at residues 416 to 436 (MVVATTTSIVVLVYYVVLNGV). Over 437-446 (DWVNTSSDQK) the chain is Cytoplasmic. The chain crosses the membrane as a helical span at residues 447 to 467 (LVTMIEVSFVYWVVLVYVTWS). Topologically, residues 468–474 (GGDHTGE) are vacuolar. The chain crosses the membrane as a helical span at residues 475–495 (FGVTVLFFVQASTSLLGLIGW). Over 496-539 (TFTRVRGGDEPLLSGEEERYGTEDERDTEKPLVEHNYDWSLQYL) the chain is Cytoplasmic. Residues 540 to 560 (LIVPVSSLVVYNSGWLVLEGV) form a helical membrane-spanning segment. An N-linked (GlcNAc...) asparagine glycan is attached at asparagine 561. Over 561–572 (NKTVQESLASEH) the chain is Vacuolar. Residues 573–593 (LIYWIVVVFSQFLVLPVVPFI) form a helical membrane-spanning segment. Residues 594–598 (TKFNR) are Cytoplasmic-facing. A helical membrane pass occupies residues 599–619 (YIVLGLSVVAVVGVLMSMAVH). The Vacuolar portion of the chain corresponds to 620–837 (PFNQGSPMKL…LVGVVKHVDV (218 aa)). N-linked (GlcNAc...) asparagine glycosylation occurs at asparagine 689.

Belongs to the peptidase M28 family. The cofactor is Zn(2+).

It localises to the vacuole membrane. May be involved in vacuolar sorting and osmoregulation. This Candida albicans (strain WO-1) (Yeast) protein is Vacuolar membrane protease.